Reading from the N-terminus, the 212-residue chain is Probable nicotinate-nucleotide adenylyltransferase (212 aa).

This sequence belongs to the NadD family.

The enzyme catalyses nicotinate beta-D-ribonucleotide + ATP + H(+) = deamido-NAD(+) + diphosphate. It functions in the pathway cofactor biosynthesis; NAD(+) biosynthesis; deamido-NAD(+) from nicotinate D-ribonucleotide: step 1/1. Catalyzes the reversible adenylation of nicotinate mononucleotide (NaMN) to nicotinic acid adenine dinucleotide (NaAD). This chain is Probable nicotinate-nucleotide adenylyltransferase, found in Shewanella sp. (strain ANA-3).